The following is a 762-amino-acid chain: Catalase-peroxidase (762 aa).

The tract at residues 1–22 (MAEAKCPFSQSRSNANVAGGGT) is disordered. The tryptophyl-tyrosyl-methioninium (Trp-Tyr) (with M-268) cross-link spans 96–242 (WHSAGTYRVF…LAASHMGLIY (147 aa)). The Proton acceptor role is filled by His-97. Positions 242-268 (YVNPEGPDGNPDPVAAARDIRTTFGRM) form a cross-link, tryptophyl-tyrosyl-methioninium (Tyr-Met) (with W-96). His-283 serves as a coordination point for heme b.

It belongs to the peroxidase family. Peroxidase/catalase subfamily. In terms of assembly, homodimer or homotetramer. Heme b serves as cofactor. In terms of processing, formation of the three residue Trp-Tyr-Met cross-link is important for the catalase, but not the peroxidase activity of the enzyme.

The protein resides in the cytoplasm. It catalyses the reaction H2O2 + AH2 = A + 2 H2O. The catalysed reaction is 2 H2O2 = O2 + 2 H2O. In terms of biological role, bifunctional enzyme with both catalase and broad-spectrum peroxidase activity. In Aspergillus niger (strain ATCC MYA-4892 / CBS 513.88 / FGSC A1513), this protein is Catalase-peroxidase.